The following is a 215-amino-acid chain: 3-dehydroquinate dehydratase (215 aa).

3-dehydroquinate is bound by residues 30-32 (EVR) and R62. H114 serves as the catalytic Proton donor/acceptor. Catalysis depends on K140, which acts as the Schiff-base intermediate with substrate. Residues R178 and Q201 each contribute to the 3-dehydroquinate site.

This sequence belongs to the type-I 3-dehydroquinase family. In terms of assembly, homodimer.

The catalysed reaction is 3-dehydroquinate = 3-dehydroshikimate + H2O. It functions in the pathway metabolic intermediate biosynthesis; chorismate biosynthesis; chorismate from D-erythrose 4-phosphate and phosphoenolpyruvate: step 3/7. Functionally, involved in the third step of the chorismate pathway, which leads to the biosynthesis of aromatic amino acids. Catalyzes the cis-dehydration of 3-dehydroquinate (DHQ) and introduces the first double bond of the aromatic ring to yield 3-dehydroshikimate. This Methanopyrus kandleri (strain AV19 / DSM 6324 / JCM 9639 / NBRC 100938) protein is 3-dehydroquinate dehydratase.